A 581-amino-acid chain; its full sequence is MESFDIVVVGAGWYGLMAARTYLELAPETNLLIVDDSSTVGGVWSKERIYPSLFAQISHPLFEYSFYPMPKDDISPDGFVSGKTIHNYLTSFTRDHNLLPRLRLNTRVERVRRGPSDAGGWVLDIKEGNPLLCHKLIYATGANSSPIIPTWPRQTFEQPVIHSLDLGKHQDYIAKSVETATVVGRSKSSYDAVYHLLCEGKRVNWVMRDGLSGPFSLYAPTFMGLWNIADHISTRFASSFSPCIMNTSGFCYNFLQRNAVGRTLTNVYWRAANYLSVSHAEYWRTPNAEKLRPRPYSDGVFWGSGGIGIATAPDFWKVFHRGNITIHSTEIDSLSHGDVVNLKNGYSLATDIVIHCTGFDKGYTTFDPELREELGLQYNSKSISRWSLLDAKAEQTVDELLPYLRTAPLQDMDPDASSRPEQGPNRHFRRLVVPELAARGDRSILFPGHIHSAFTPLAAELQALWGVSWMLGWRELPPQEEMELEAATFNAWTRKRYLEQGKKHSYFIYDYIPYIDTLMRDLGLNPYRKSSVFEEWFVRYKPSDYGTILDEYRDIRRLSLECLQGTGGFAERTNGHGVNMK.

43 to 46 (VWSK) is an FAD binding site. 54–56 (FAQ) is an NADP(+) binding site. V108 is an FAD binding site. NADP(+) contacts are provided by residues 183-202 (VGRS…EGKR), 219-220 (AP), and 351-352 (DI). Residue M470 participates in FAD binding.

The protein belongs to the FAD-binding monooxygenase family. It depends on FAD as a cofactor.

The protein operates within polyketide biosynthesis. In terms of biological role, FAD-dependent monooxygenase; part of the gene cluster that mediates the biosynthesis of depudecin, a highly oxidized eleven-carbon linear polyketide that acts as a histone deacetylase (HDAC) inhibitor and makes a small contribution to pathogenesis. The reducing polyketide synthase DEP5 is the central enzyme in depudecin biosynthesis by yielding the backbone polyketide chain. The monooxygenases DEP2 and DEP4, as well as the uncharacterized protein DEP1, then act as tailoring enzymes to modify the intermediate polyketide chain into depudecin. This chain is FAD-dependent monooxygenase DEP4, found in Alternaria brassicicola (Dark leaf spot agent).